The primary structure comprises 397 residues: Na(+)/H(+) antiporter NhaA 1 (397 aa).

A run of 12 helical transmembrane segments spans residues 15-35 (FQLE…ALII), 42-62 (YLYG…LNIA), 65-85 (LLLW…GLEV), 101-121 (ILPA…YWFI), 129-149 (VAGW…VLAL), 160-180 (LFLM…IALF), 183-203 (GTLS…LVAM), 219-241 (LILW…ALAF), 265-285 (WVAY…SLAG), 299-319 (ITIG…WVAV), 335-355 (ILGV…VGSL), and 370-390 (MGIL…TAMA).

It belongs to the NhaA Na(+)/H(+) (TC 2.A.33) antiporter family.

The protein localises to the cell inner membrane. It catalyses the reaction Na(+)(in) + 2 H(+)(out) = Na(+)(out) + 2 H(+)(in). Its function is as follows. Na(+)/H(+) antiporter that extrudes sodium in exchange for external protons. The sequence is that of Na(+)/H(+) antiporter NhaA 1 from Pseudomonas putida (strain ATCC 47054 / DSM 6125 / CFBP 8728 / NCIMB 11950 / KT2440).